A 447-amino-acid chain; its full sequence is N-succinylarginine dihydrolase (447 aa).

Residues 19–28 (GGLAVGNIAS), Asn-110, and 137–138 (HR) contribute to the substrate site. Glu-174 is a catalytic residue. Position 213 (Arg-213) interacts with substrate. Residue His-249 is part of the active site. Residues Asp-251 and Asn-362 each coordinate substrate. Cys-368 functions as the Nucleophile in the catalytic mechanism.

This sequence belongs to the succinylarginine dihydrolase family. As to quaternary structure, homodimer.

It catalyses the reaction N(2)-succinyl-L-arginine + 2 H2O + 2 H(+) = N(2)-succinyl-L-ornithine + 2 NH4(+) + CO2. Its pathway is amino-acid degradation; L-arginine degradation via AST pathway; L-glutamate and succinate from L-arginine: step 2/5. In terms of biological role, catalyzes the hydrolysis of N(2)-succinylarginine into N(2)-succinylornithine, ammonia and CO(2). This chain is N-succinylarginine dihydrolase, found in Nitrosospira multiformis (strain ATCC 25196 / NCIMB 11849 / C 71).